The sequence spans 346 residues: D-erythrose-4-phosphate dehydrogenase (346 aa).

Residue Arg-11 to Ile-12 coordinates NAD(+). Residues Ser-163–Thr-165, Arg-209, Thr-222–Lys-223, and Arg-245 contribute to the substrate site. Cys-164 (nucleophile) is an active-site residue. Asn-327 contributes to the NAD(+) binding site.

The protein belongs to the glyceraldehyde-3-phosphate dehydrogenase family. Epd subfamily. As to quaternary structure, homotetramer.

Its subcellular location is the cytoplasm. The enzyme catalyses D-erythrose 4-phosphate + NAD(+) + H2O = 4-phospho-D-erythronate + NADH + 2 H(+). The protein operates within cofactor biosynthesis; pyridoxine 5'-phosphate biosynthesis; pyridoxine 5'-phosphate from D-erythrose 4-phosphate: step 1/5. Catalyzes the NAD-dependent conversion of D-erythrose 4-phosphate to 4-phosphoerythronate. This is D-erythrose-4-phosphate dehydrogenase from Vibrio vulnificus (strain YJ016).